A 635-amino-acid chain; its full sequence is Threonine--tRNA ligase (635 aa).

The 61-residue stretch at 1 to 61 (MIKITLKDGK…HKDSSLEILT (61 aa)) folds into the TGS domain. The catalytic stretch occupies residues 242 to 532 (DHRKLGKELD…LIEQYAGAFP (291 aa)). Zn(2+)-binding residues include C333, H384, and H509.

This sequence belongs to the class-II aminoacyl-tRNA synthetase family. As to quaternary structure, homodimer. Zn(2+) is required as a cofactor.

The protein resides in the cytoplasm. It carries out the reaction tRNA(Thr) + L-threonine + ATP = L-threonyl-tRNA(Thr) + AMP + diphosphate + H(+). In terms of biological role, catalyzes the attachment of threonine to tRNA(Thr) in a two-step reaction: L-threonine is first activated by ATP to form Thr-AMP and then transferred to the acceptor end of tRNA(Thr). Also edits incorrectly charged L-seryl-tRNA(Thr). The polypeptide is Threonine--tRNA ligase (Clostridium botulinum (strain Langeland / NCTC 10281 / Type F)).